The primary structure comprises 130 residues: Peptidyl-prolyl cis-trans isomerase pin4 (130 aa).

Residues 1–38 (MGKDKKASGSGSGSKGGKDAGNKDAGKDAGKASKGAQS) form a disordered region. Residues 16–31 (GGKDAGNKDAGKDAGK) show a composition bias toward basic and acidic residues. The region spanning 36-128 (AQSINVRHIL…FGYHIIMVEG (93 aa)) is the PpiC domain.

This sequence belongs to the PpiC/parvulin rotamase family. PIN4 subfamily.

The enzyme catalyses [protein]-peptidylproline (omega=180) = [protein]-peptidylproline (omega=0). Functionally, PPIases accelerate the folding of proteins. It catalyzes the cis-trans isomerization of proline imidic peptide bonds in oligopeptides. The sequence is that of Peptidyl-prolyl cis-trans isomerase pin4 (ppi-5) from Neurospora crassa (strain ATCC 24698 / 74-OR23-1A / CBS 708.71 / DSM 1257 / FGSC 987).